A 514-amino-acid polypeptide reads, in one-letter code: Major facilitator superfamily domain-containing protein 4A (514 aa).

Transmembrane regions (helical) follow at residues 19–39 (LTYWSVFFSFGLCIAFLGPTL), 53–73 (ISWVFLSQQLCLLLGSALGGV), 82–102 (LWALFTSSLAISLVFAVIPFC), 107–127 (VLALVMALAGLAMGCIDTVAN), and 139–159 (AVFLQVLHFFVGFGALLSPLI). N-linked (GlcNAc...) asparagine glycosylation is found at Asn-177 and Asn-203. Transmembrane regions (helical) follow at residues 221-241 (YAFWIMALINLPVPMAVLMLL), 307-327 (FFAIHITAALVLFMTDGLTGA), 347-367 (VAGYLPSLFWGFITLGRLLSI), 376-396 (ATMVFINVVGVVVTFLVLLIF), 400-420 (VVFLFVGTASLGLFLSSTFPS), 438-458 (VLVTGAGVGEMVLQMLVGSIF), and 466-486 (FLVCGVIFGCLAFTFYILLLF).

Belongs to the major facilitator superfamily.

The protein resides in the membrane. This Pongo abelii (Sumatran orangutan) protein is Major facilitator superfamily domain-containing protein 4A (MFSD4A).